A 289-amino-acid chain; its full sequence is ATP synthase gamma chain (289 aa).

The protein belongs to the ATPase gamma chain family. In terms of assembly, F-type ATPases have 2 components, CF(1) - the catalytic core - and CF(0) - the membrane proton channel. CF(1) has five subunits: alpha(3), beta(3), gamma(1), delta(1), epsilon(1). CF(0) has three main subunits: a, b and c.

Its subcellular location is the cell inner membrane. In terms of biological role, produces ATP from ADP in the presence of a proton gradient across the membrane. The gamma chain is believed to be important in regulating ATPase activity and the flow of protons through the CF(0) complex. This is ATP synthase gamma chain from Leptospira biflexa serovar Patoc (strain Patoc 1 / ATCC 23582 / Paris).